We begin with the raw amino-acid sequence, 734 residues long: Diacylglycerol kinase alpha (734 aa).

EF-hand domains lie at arginine 109–methionine 144 and glutamate 154–leucine 189. Aspartate 122, aspartate 124, asparagine 126, glutamate 133, aspartate 167, aspartate 169, serine 171, serine 173, and glutamate 178 together coordinate Ca(2+). 2 consecutive Phorbol-ester/DAG-type zinc fingers follow at residues glutamine 204–cysteine 252 and threonine 268–cysteine 318. The tract at residues asparagine 358–proline 505 is necessary and sufficient for the diacylglycerol kinase activity. The region spanning serine 371–proline 505 is the DAGKc domain. At lysine 483 the chain carries N6-acetyllysine.

It belongs to the eukaryotic diacylglycerol kinase family. Monomer.

It localises to the cytoplasm. The protein resides in the cytosol. It carries out the reaction a 1,2-diacyl-sn-glycerol + ATP = a 1,2-diacyl-sn-glycero-3-phosphate + ADP + H(+). The enzyme catalyses a 1-O-alkyl-sn-glycerol + ATP = a 1-O-alkyl-sn-glycero-3-phosphate + ADP + H(+). The catalysed reaction is 1-O-alkyl-2-acyl-sn-glycerol + ATP = 1-O-alkyl-2-acyl-sn-glycero-3-phosphate + ADP + H(+). It catalyses the reaction 1,2-dihexadecanoyl-sn-glycerol + ATP = 1,2-dihexadecanoyl-sn-glycero-3-phosphate + ADP + H(+). It carries out the reaction 1-hexadecanoyl-2-(9Z-octadecenoyl)-sn-glycerol + ATP = 1-hexadecanoyl-2-(9Z-octadecenoyl)-sn-glycero-3-phosphate + ADP + H(+). The enzyme catalyses 2-(9Z-octadecenoyl)-glycerol + ATP = 2-(9Z-octadecenoyl)-sn-glycero-3-phosphate + ADP + H(+). The catalysed reaction is 1,2-di-(9Z-octadecenoyl)-sn-glycerol + ATP = 1,2-di-(9Z-octadecenoyl)-sn-glycero-3-phosphate + ADP + H(+). It catalyses the reaction 1-octadecanoyl-2-(5Z,8Z,11Z,14Z-eicosatetraenoyl)-sn-glycerol + ATP = 1-octadecanoyl-2-(5Z,8Z,11Z,14Z-eicosatetraenoyl)-sn-glycero-3-phosphate + ADP + H(+). It carries out the reaction 1,2-didecanoyl-sn-glycerol + ATP = 1,2-didecanoyl-sn-glycero-3-phosphate + ADP + H(+). The enzyme catalyses 1-O-hexadecyl-2-acetyl-sn-glycerol + ATP = 1-O-hexadecyl-2-acetyl-sn-glycero-3-phosphate + ADP + H(+). The catalysed reaction is 1-O-hexadecyl-2-(5Z,8Z,11Z,14Z-eicosatetraenoyl)-sn-glycerol + ATP = 1-O-hexadecyl-2-(5Z,8Z,11Z,14Z-eicosatetraenoyl)-sn-glycero-3-phosphate + ADP + H(+). It catalyses the reaction 1-O-hexadecyl-2-(9Z-octadecenoyl)-sn-glycerol + ATP = 1-O-hexadecyl-2-(9Z-octadecenoyl)-sn-glycero-3-phosphate + ADP + H(+). It carries out the reaction 1-O-hexadecyl-sn-glycerol + ATP = 1-O-hexadecyl-sn-glycero-3-phosphate + ADP + H(+). It functions in the pathway lipid metabolism; glycerolipid metabolism. Its activity is regulated as follows. Stimulated by calcium and phosphatidylserine. In terms of biological role, diacylglycerol kinase that converts diacylglycerol/DAG into phosphatidic acid/phosphatidate/PA and regulates the respective levels of these two bioactive lipids. Thereby, acts as a central switch between the signaling pathways activated by these second messengers with different cellular targets and opposite effects in numerous biological processes. Also plays an important role in the biosynthesis of complex lipids. Can also phosphorylate 1-alkyl-2-acylglycerol in vitro as efficiently as diacylglycerol provided it contains an arachidonoyl group. Also involved in the production of alkyl-lysophosphatidic acid, another bioactive lipid, through the phosphorylation of 1-alkyl-2-acetyl glycerol. The sequence is that of Diacylglycerol kinase alpha (DGKA) from Sus scrofa (Pig).